The following is a 635-amino-acid chain: 3-dehydroshikimate dehydratase (635 aa).

Residues E134, D165, Q191, and E239 each coordinate a divalent metal cation. 2 VOC domains span residues 295–414 (GVEF…LVEQ) and 440–590 (RIDH…VYTE). H443, H521, and E599 together coordinate Mg(2+).

This sequence belongs to the bacterial two-domain DSD family. Homodimer. Co(2+) is required as a cofactor. The cofactor is Ni(2+). Requires Mg(2+) as cofactor. Mn(2+) serves as cofactor.

The catalysed reaction is 3-dehydroshikimate = 3,4-dihydroxybenzoate + H2O. Its pathway is aromatic compound metabolism; 3,4-dihydroxybenzoate biosynthesis. In terms of biological role, catalyzes the conversion of 3-dehydroshikimate to protocatechuate (3,4-dihydroxybenzoate), a common intermediate of quinate and shikimate degradation pathways. The sequence is that of 3-dehydroshikimate dehydratase from Pseudomonas putida (strain ATCC 47054 / DSM 6125 / CFBP 8728 / NCIMB 11950 / KT2440).